Consider the following 342-residue polypeptide: Zinc transporter ZIP11 (342 aa).

7 consecutive transmembrane segments (helical) span residues 12–32 (LLGTFFTWAMTAAGAALVFIF), 44–64 (LGFAAGVMLAASYWSLLAPAV), 72–92 (GFGAFAFFPVAVGFTLGAAFV), 194–214 (IALLILAITIHNIPEGLAVGV), 263–285 (FWYGQLSGMVEPLAGVFGAFAVV), 290–307 (ILPYALAFAAGAMVYVVM), and 322–342 (LASWASILGFVVMMSLDVGLG).

This sequence belongs to the ZIP transporter (TC 2.A.5) family. As to expression, highly expressed in the testes and portions of the digestive system including the stomach, ileum and cecum. In contrast, expressed at very low levels in liver, duodenum, jejunum, and colon.

The protein resides in the cell membrane. Its subcellular location is the nucleus. It is found in the cytoplasm. The protein localises to the golgi apparatus. The catalysed reaction is Zn(2+)(in) = Zn(2+)(out). The enzyme catalyses Cu(2+)(in) = Cu(2+)(out). In terms of biological role, zinc importer that regulates cytosolic zinc concentration either via zinc influx from the extracellular compartment or efflux from intracellular organelles such as Golgi apparatus. May transport copper ions as well. The transport mechanism remains to be elucidated. This is Zinc transporter ZIP11 (Slc39a11) from Mus musculus (Mouse).